We begin with the raw amino-acid sequence, 267 residues long: Putative transcription factor Ovo-like 1 (267 aa).

4 C2H2-type zinc fingers span residues 118-140 (FTCR…MKCH), 146-168 (HLCT…VRTH), 174-197 (YKCS…KKIH), and 213-235 (YVCE…LKEH).

In terms of tissue distribution, expressed in fetal kidney, and also in adult pancreas and placenta. Not expressed in intestine, peripheral blood lymphocytes and ovary.

Its subcellular location is the nucleus. In terms of biological role, putative transcription factor. Involved in hair formation and spermatogenesis. May function in the differentiation and/or maintenance of the urogenital system. The protein is Putative transcription factor Ovo-like 1 (OVOL1) of Homo sapiens (Human).